A 102-amino-acid chain; its full sequence is Large ribosomal subunit protein bL21 (102 aa).

The protein belongs to the bacterial ribosomal protein bL21 family. Part of the 50S ribosomal subunit. Contacts protein L20.

Functionally, this protein binds to 23S rRNA in the presence of protein L20. This is Large ribosomal subunit protein bL21 from Bacillus pumilus (strain SAFR-032).